The sequence spans 2142 residues: MADAAARQLQYEYKANSNLVLQADVRLIERPRRDEATGEVCSLVGKLDGTRMGDRYQRTKPEKTEERKVKRQKRDEAQYDFERMKGATLLSEGIDEMVGIVYRPKTQETRQTYEVLLSFIQEALGDQPRDILCGAADEILAVLKNDRLKDRERKKDIDSLLGAVTDERFALLVNLGKKITDFGSDAVNALTAAPNNEEQIDETYGINVQFEESEEESDNDMYGEIRDDDAQDEGEEARIDHTLHAENLANEEAANNVKKERSLHPLDIDAYWLQRCLSKFYKDAMVSQSKAADVLKILKDAADDRDCENQLVLLLGYDCFDFIKQLKLNRQMVLYCTMLASAQTDSERQRIREKMRGNSALAKILRQLDTGKSEDQEEGEARGSKRGKGDAEDGGAAAAGQVAGVRQLLELEEMAFTQGSHFMANKRCQLPDGSYRKQRKGYEEVHVPALKPVPFDANEELQPVDKLPKYVQPVFEGFKTLNRIQSRLYKAALDSDENMLLCAPTGAGKTNVALLTMMREIGKHINEDGTINAQDFKIIYVAPMKSLVQEMVGNFGRRLACYNLTVSELTGDHQLTREQIAATQVIVCTPEKWDIITRKGGERTFVSLVRLVIIDEIHLLHDERGPVLEALVARTIRNIETTQEEVRLVGLSATLPNYQDVATFLRVKPDKGLFYFDNSYRPVSLEQQYIGVTEKKALKRFQVMNEIVYEKTMEHAGRNQVLVFVHSRKETGKTARAVRDMCLEQDTLGSFLKEGSASMEVLRTEAEQVKNTELKELLPYGFAIHHAGMTRVDRTLVEDLFADRHIQVLVSTATLAWGVNLPAHTVIIKGTQVYNPEKGRWVELSALDVLQMLGRAGRPQYDTKGEGILITNHSELQFYLSLLNQQLPIESQFISKLPDMLNAEIVLGTVQHLQDAVNWLGYTYLYIRMLRNPTLYGVSHDAIKADPLLEQHRADLLHTAACCLERSGLIKYDRKTGHFQVTDLGRIASHYYLTHETMLTYNQLLKQTLSEIELFRVFSLSSEFRHISVREEEKLELQKLMERVPIPIKESIEEHSAKVNVLLQAYISQLKLEGFALMSDMVFITQSAARLMRAIFEIVLTRGWAQLADKTLTLCKMIDRRMWQSMTPLRQFKKMPDEIAKKLEKKHFPWGRLYDLEPHELGELIRVPKLGKTIHKFVHQFPKLELSTHIQPITRGTLRVELTITPDFQWDEKVHGQSEGFWVLIEDVDSELILHHEFFLLKQKYSQDEHQLKFFVPVFEPLPPQYFLRIVSDRWIGAETQLPVSFRHLILPEKNMPPTELLDLQPLPISALRQPKFESFYSQRFPQFNPIQTQVFNAVYNSDENVFVGAPTGSGKMTIAEFAIMRLFTTQSDARCVYLVSEEALADLVFADWHSKFGSLDIKVVKLTGETGTDLKLIAKGQLVITTADKWDVLSRRWKQRKNVQLVNLFIVDELQLVGGEEGPVLEIVCSRMRYISSQIEKQIRIVALSASLTDARDVAQWLGCNPNATFNFHPSVRPIPLELHIQGYNVTHNATRIATMSKPVYNAILKYSAHKPVIVFVSSRKQARLTAIDVLTYAASDLQPNRFFHAEEEDIKPFLERMTDKTLKETLAQGVAYLHEGLSASDHRLVEQLFDSGAVQVAVISRDLCWGMSISAHLVIIMDTQFYNGKNHSYEDYPITDVLQMIGRANRPNEDADAKCVLMCQSSKKDFFKKFINEPLPIESHLDHRMHDHFNAEVVTKTIENKQDAVDYLTWTFLYRRLTQNPNYYNLQGVTHRHLSDHLSELVENTLSDLEQSKCISVEDDMDTLPLNLGMIAAYYYINYTTIELFSLSLNSKTKVRGLLEIISSAAEYEDVVVRHHEEQVLRTLSQRLPNKLTGPNETAPKFNDPHIKTNLLLQAHLSRLQLGPELQGDTEQILSKAIRLIQACVDVLSSNGWLSPAVAAMELAQMVTQAMWSKDSYLKQLPHFSPEIVKRCTEKKIETVFDIMELEDEDRTRLLQLSDLQMADVARFCNRYPNIELNYEVVDKDRINSGSTVNVVVQLEREDEVTGPVIAPFFPQKREEGWWVVIGDPKTNSLLSIKRLTLQQKAKVKLDFVAPSPGKHDYTLYYMSDSYLGCDQEYKFSIEVGDFQSESESESD.

Disordered stretches follow at residues 52-74, 211-234, and 366-396; these read MGDR…RQKR, EESE…QDEG, and RQLD…DGGA. Over residues 369–391 the composition is skewed to basic and acidic residues; that stretch reads DTGKSEDQEEGEARGSKRGKGDA. Residues 490-673 form the Helicase ATP-binding 1 domain; sequence KAALDSDENM…FLRVKPDKGL (184 aa). 503–510 serves as a coordination point for ATP; the sequence is APTGAGKT. Residues 615–618 carry the DEIH box motif; the sequence is DEIH. One can recognise a Helicase C-terminal 1 domain in the interval 684-917; it reads SLEQQYIGVT…GTVQHLQDAV (234 aa). Residues 981-1286 enclose the SEC63 1 domain; the sequence is VTDLGRIASH…GAETQLPVSF (306 aa). A Helicase ATP-binding 2 domain is found at 1337–1511; it reads NAVYNSDENV…WLGCNPNATF (175 aa). 1350-1357 contributes to the ATP binding site; it reads APTGSGKM. The DELQ box motif lies at 1453-1456; sequence DELQ. Positions 1544 to 1752 constitute a Helicase C-terminal 2 domain; the sequence is PVYNAILKYS…TIENKQDAVD (209 aa). Residues 1811 to 2128 enclose the SEC63 2 domain; the sequence is PLNLGMIAAY…GCDQEYKFSI (318 aa).

Belongs to the helicase family. SKI2 subfamily.

Its subcellular location is the nucleus. It carries out the reaction ATP + H2O = ADP + phosphate + H(+). Its function is as follows. Catalyzes the ATP-dependent unwinding of U4/U6 RNA duplices, an essential step in the assembly of a catalytically active spliceosome. Plays a role in pre-mRNA splicing. This chain is U5 small nuclear ribonucleoprotein 200 kDa helicase, found in Drosophila melanogaster (Fruit fly).